The chain runs to 595 residues: Methionine--tRNA ligase (595 aa).

Residues 11-21 (PYANGPRHIGH) carry the 'HIGH' region motif. Zn(2+) is bound by residues Cys143, Cys146, Cys156, and Cys159. The short motif at 350–354 (KFSSS) is the 'KMSKS' region element. Residue Ser353 coordinates ATP.

The protein belongs to the class-I aminoacyl-tRNA synthetase family. MetG type 1 subfamily. In terms of assembly, monomer. Zn(2+) is required as a cofactor.

It localises to the cytoplasm. It carries out the reaction tRNA(Met) + L-methionine + ATP = L-methionyl-tRNA(Met) + AMP + diphosphate. Functionally, is required not only for elongation of protein synthesis but also for the initiation of all mRNA translation through initiator tRNA(fMet) aminoacylation. The protein is Methionine--tRNA ligase of Nocardioides sp. (strain ATCC BAA-499 / JS614).